Reading from the N-terminus, the 80-residue chain is Defensin-like protein 17 (80 aa).

A signal peptide spans 1 to 29; that stretch reads MAKSATIITFLFAALVLFAAFEAPTMVEA. A Pyrrolidone carboxylic acid modification is found at Q30. Cystine bridges form between C33–C80, C44–C65, C50–C74, and C54–C76.

This sequence belongs to the DEFL family.

The protein resides in the secreted. In terms of biological role, confers broad-spectrum resistance to pathogens. This Arabidopsis thaliana (Mouse-ear cress) protein is Defensin-like protein 17 (PDF1.2C).